The primary structure comprises 419 residues: Putative competence-damage inducible protein (419 aa).

This sequence belongs to the CinA family.

The polypeptide is Putative competence-damage inducible protein (Lysinibacillus sphaericus (strain C3-41)).